The sequence spans 844 residues: DNA mismatch repair protein MutS (844 aa).

Residue 610–617 coordinates ATP; that stretch reads GPNMGGKS.

The protein belongs to the DNA mismatch repair MutS family.

Its function is as follows. This protein is involved in the repair of mismatches in DNA. It is possible that it carries out the mismatch recognition step. This protein has a weak ATPase activity. This Francisella tularensis subsp. tularensis (strain WY96-3418) protein is DNA mismatch repair protein MutS.